An 862-amino-acid polypeptide reads, in one-letter code: uncharacterized protein (862 aa).

Residues 1-25 form the signal peptide; sequence MKPRPYSVFLFLHIVFYSLLSAVNG. The Lumenal segment spans residues 26-61; sequence SPSLDYFETCSNFVPRAGIPTFSPYAVIKNFDEVNR. A helical transmembrane segment spans residues 62–82; it reads MYYIQVVGNLSGVITIVGGNG. The Cytoplasmic segment spans residues 83–187; that stretch reads SHIHAASVYS…STTLYYFYPV (105 aa). The helical transmembrane segment at 188–208 threads the bilayer; the sequence is ISYLVVVSLAYVSFSIIYALF. The Lumenal portion of the chain corresponds to 209-230; that stretch reads LNPWTGSLDPFKSIFNFNMDPD. Residues 231 to 250 form a helical membrane-spanning segment; it reads ALRLTSLGFFDFVQYLQFAV. Topologically, residues 251–256 are cytoplasmic; sequence STAQVS. The helical transmembrane segment at 257 to 277 threads the bilayer; sequence VMFPKFYINIMAALSWGTALF. The Lumenal segment spans residues 278 to 329; that stretch reads RFPIFSEPAEYQFADFADLSVASSSYADYLPKSYGMYSFLDSIGIGTACWLP. The helical transmembrane segment at 330–350 threads the bilayer; that stretch reads FLIVMVIYLFAALFVALLVIF. The Cytoplasmic segment spans residues 351–372; that stretch reads LKWLMSRIFNETIAETRWDTWS. A helical membrane pass occupies residues 373–393; that stretch reads FIAGSLIRLYFLTYFPTVAYM. Residues 394–404 are Lumenal-facing; it reads SFQFVAPPTGY. The helical transmembrane segment at 405 to 425 threads the bilayer; the sequence is EIIPVLWFIFFGIFIPVYLYM. Residues 426–457 lie on the Cytoplasmic side of the membrane; that stretch reads NLAFVEPSSKLLEDQTYLHLFGSIYNSFREER. A helical transmembrane segment spans residues 458–480; sequence VMFWIFPIAVQFMRGITVGVIGS. Over 481-483 the chain is Lumenal; sequence SGS. Residues 484–503 traverse the membrane as a helical segment; the sequence is AQLAIFFILEVANVVAYAYV. Residues 504–514 are Cytoplasmic-facing; it reads RPHFPQTSMNT. The helical transmembrane segment at 515–535 threads the bilayer; sequence LNTFISTMRLITVILMIPLDP. At 536–545 the chain is on the lumenal side; that stretch reads RLKVLGISRD. The helical transmembrane segment at 546-566 threads the bilayer; the sequence is LLAYAILFIHIMVCILFLLLS. The Cytoplasmic portion of the chain corresponds to 567-862; that stretch reads TQRFMEVSAR…AESAWSIPHP (296 aa). Residues 668-686 are compositionally biased toward polar residues; that stretch reads QASSLVPSKNNTASSSSLM. Disordered regions lie at residues 668 to 717 and 815 to 862; these read QASS…SVRK and VLRS…IPHP. The segment covering 689–700 has biased composition (low complexity); sequence SPVTPSSPYSTS. Residues 834–850 show a composition bias toward basic and acidic residues; sequence EPSRDEQYSMERKKTDD.

It belongs to the transient receptor potential (TRP) ion channel family.

The protein resides in the cytoplasm. The protein localises to the golgi apparatus membrane. This is an uncharacterized protein from Schizosaccharomyces pombe (strain 972 / ATCC 24843) (Fission yeast).